The chain runs to 216 residues: MTETIDPDLIERGRKTFAGDWHFIWASPSIETLPPMDGLEVAFAGRSNVGKSSLINALTGRNALARTSHTPGRTQELIFFDGPPGAGLRLVDMPGYGYAAASKAKVASWTSLIHKFLQGRATLARVYVLIDGRHGLKDVDLDILKTLDKAAVSYQIVLTKADQVKAAELAERVDATRTALAKHPAAFPELLTTSSRTGAGMPELRAAMIRLLDERR.

The region spanning 37-214 is the EngB-type G domain; it reads DGLEVAFAGR…RAAMIRLLDE (178 aa). GTP contacts are provided by residues 45–52, 72–76, 92–95, 159–162, and 193–195; these read GRSNVGKS, GRTQE, DMPG, TKAD, and TSS. Residues Ser-52 and Thr-74 each contribute to the Mg(2+) site.

The protein belongs to the TRAFAC class TrmE-Era-EngA-EngB-Septin-like GTPase superfamily. EngB GTPase family. Mg(2+) is required as a cofactor.

Functionally, necessary for normal cell division and for the maintenance of normal septation. In Rhodopseudomonas palustris (strain HaA2), this protein is Probable GTP-binding protein EngB.